The following is a 97-amino-acid chain: Acylphosphatase (97 aa).

The region spanning 7-97 (RLTAWVHGHV…QERFEGFVER (91 aa)) is the Acylphosphatase-like domain. Residues R22 and N40 contribute to the active site.

Belongs to the acylphosphatase family.

The catalysed reaction is an acyl phosphate + H2O = a carboxylate + phosphate + H(+). The polypeptide is Acylphosphatase (acyP) (Mycobacterium avium (strain 104)).